The chain runs to 96 residues: uncharacterized protein (96 aa).

The signal sequence occupies residues Met1–Ala15.

This is an uncharacterized protein from Caenorhabditis elegans.